A 1587-amino-acid polypeptide reads, in one-letter code: NHS-like protein 1 (1587 aa).

Serine 24 bears the Phosphoserine mark. Disordered stretches follow at residues 140–163 (FAAGSSPCDDYQDEDTEADRKCSL) and 176–202 (RPKTPTSGDFSDLHTQTNWTKSLPLPT). Polar residues predominate over residues 179-196 (TPTSGDFSDLHTQTNWTK). A phosphoserine mark is found at serine 197 and serine 328. A compositionally biased stretch (polar residues) spans 431-446 (SAGQLDSRTPGSSSYS). 2 disordered regions span residues 431–470 (SAGQLDSRTPGSSSYSKIKPRDRPTPRCSVKDDHQSPRHH) and 549–584 (SEPWEYKTSSNGRASPLKPHLATPGCSTPTSNVSSC). The span at 449 to 470 (KPRDRPTPRCSVKDDHQSPRHH) shows a compositional bias: basic and acidic residues. Residue serine 563 is modified to Phosphoserine. Positions 573-584 (GCSTPTSNVSSC) are enriched in polar residues. Phosphoserine is present on serine 629. 3 disordered regions span residues 661 to 687 (KAKKPPLPPSRTDSLRRIPKKNNQTNG), 705 to 767 (SLPG…SSVK), and 789 to 1059 (NPTG…RPPM). Residues 705–720 (SLPGKGGSSPSQSPCS) are compositionally biased toward low complexity. Polar residues-rich tracts occupy residues 730 to 750 (SRSQSIVSEGSSLTSTTTPNV), 757 to 767 (TPSQSDTSSVK), 792 to 801 (GGCSANTEAA), and 838 to 855 (RVTSPSSGYSSQSNTPTA). The segment covering 885–911 (SLISSMSISSSSTSLSSNTSTEGSGTM) has biased composition (low complexity). Pro residues-rich tracts occupy residues 923-934 (APPPPPLPPLPS), 958-972 (PLPPSPMFPPPPPEA), and 998-1021 (SLPPVPAPPPFLPSSEPPPAPPLD). The span at 1040–1055 (SSREALRRPANKEEGC) shows a compositional bias: basic and acidic residues. The residue at position 1079 (serine 1079) is a Phosphoserine. Disordered regions lie at residues 1083–1534 (AVLF…ARRA) and 1565–1587 (VDGIGRAEGNGPSEQCGGTEQKS). 2 stretches are compositionally biased toward polar residues: residues 1089-1099 (PSAQEQRTPTA) and 1112-1141 (SRNSINEMESESQAASVTSSLPMPAKSQSQ). Residues serine 1157 and serine 1218 each carry the phosphoserine modification. Positions 1222-1234 (AEGEAVRSQEEKS) are enriched in basic and acidic residues. A compositionally biased stretch (polar residues) spans 1275–1285 (QPNTSPGPTQE). The segment covering 1360-1370 (GRKDSEDDHTR) has biased composition (basic and acidic residues). Phosphoserine occurs at positions 1373 and 1375. Phosphothreonine is present on threonine 1379. Polar residues predominate over residues 1392 to 1409 (QVGSIQRSIKKSTTSSDN). Basic and acidic residues predominate over residues 1434-1447 (KSTDPRFQRSRSEP). Low complexity-rich tracts occupy residues 1448–1460 (SADSPDSPSSCSP) and 1484–1503 (SGPRYSRSRTPPSAASSRYS). The span at 1576–1587 (PSEQCGGTEQKS) shows a compositional bias: polar residues.

Belongs to the NHS family.

The sequence is that of NHS-like protein 1 (Nhsl1) from Mus musculus (Mouse).